The following is a 245-amino-acid chain: Membrane-associated progesterone-binding protein 4 (245 aa).

The helical transmembrane segment at 6–26 (RFLLSPFVGVTFIVVLVSLYF) threads the bilayer. A Cytochrome b5 heme-binding domain is found at 39 to 138 (KRLFSAEELA…RTYTPVGKLV (100 aa)). A steroid-binding region spans residues 45-138 (EELALYNGTD…RTYTPVGKLV (94 aa)).

The protein belongs to the cytochrome b5 family. MAPR subfamily.

The protein resides in the membrane. This is Membrane-associated progesterone-binding protein 4 from Arabidopsis thaliana (Mouse-ear cress).